We begin with the raw amino-acid sequence, 154 residues long: MQILRIAQLMALLATCASALPTSTGSRVYSRDVDQTQGGFSGSPTTNSPDSVAETGRLEARSGGSSSTETEKERKKRIKAEQNARIRQEEINRKPYQCPYCSDPTVFSHSDALGRHIYTIHRGMPIYNAKDPRKTAIPYNPPGRSTSIFGSEPF.

The first 19 residues, 1–19 (MQILRIAQLMALLATCASA), serve as a signal peptide directing secretion. The interval 24 to 85 (TGSRVYSRDV…KRIKAEQNAR (62 aa)) is disordered. The span at 35-50 (QTQGGFSGSPTTNSPD) shows a compositional bias: polar residues. The span at 69-85 (ETEKERKKRIKAEQNAR) shows a compositional bias: basic and acidic residues. The C2H2-type; degenerate zinc finger occupies 96 to 121 (YQCPYCSDPTVFSHSDALGRHIYTIH).

The protein localises to the secreted. The protein resides in the host nucleus. In terms of biological role, probable secreted effector that translocates into the nuclei of host cells to reprogram the expression of targeted genes by binding on effector binding elements in rice. In Pyricularia oryzae (strain 70-15 / ATCC MYA-4617 / FGSC 8958) (Rice blast fungus), this protein is Host transcription reprogramming factor 5.